The following is a 112-amino-acid chain: DNA-directed RNA polymerase subunit Rpo11 (112 aa).

Belongs to the archaeal Rpo11/eukaryotic RPB11/RPC19 RNA polymerase subunit family. As to quaternary structure, part of the RNA polymerase complex.

The protein resides in the cytoplasm. The enzyme catalyses RNA(n) + a ribonucleoside 5'-triphosphate = RNA(n+1) + diphosphate. DNA-dependent RNA polymerase (RNAP) catalyzes the transcription of DNA into RNA using the four ribonucleoside triphosphates as substrates. The chain is DNA-directed RNA polymerase subunit Rpo11 from Methanopyrus kandleri (strain AV19 / DSM 6324 / JCM 9639 / NBRC 100938).